We begin with the raw amino-acid sequence, 1506 residues long: Condensin-2 complex subunit D3 (1506 aa).

Positions 154–194 are disordered; that stretch reads SNLTQKRKKDHSKSSKDNYRKSRKRGKPPRKEDYQVDELSR. 3 HEAT repeats span residues 442–476, 532–567, and 574–605; these read HKFF…LELS, PGER…LKHC, and QDLL…VMAQ. S562 carries the post-translational modification Phosphoserine. The segment covering 884 to 897 has biased composition (polar residues); it reads SDHLPSSQGTTDAL. Residues 884–908 are disordered; the sequence is SDHLPSSQGTTDALDSQPPFQPRSS. An HEAT 4 repeat occupies 968-1004; that stretch reads TVMVDNYIPNISVCLKDSDPFIRKQTLVLLTNLLQEE. A coiled-coil region spans residues 1213 to 1270; the sequence is ALRELMNYLREVMQDYRDEINDFFAVDKQLASELEYDMKKYNEQLAQEQALTEHANAT. The segment at 1317 to 1353 is disordered; it reads QDNADVPPTQSRPSAPRSNFTPTLPPISENGPLKIMS. Residues 1324–1338 show a composition bias toward polar residues; the sequence is PTQSRPSAPRSNFTP. A phosphoserine mark is found at S1359, S1368, S1381, and S1393. Disordered regions lie at residues 1385–1412 and 1473–1506; these read LPFN…ESDR and PQSP…KTAN. The span at 1393-1405 shows a compositional bias: low complexity; sequence SPENPSSHESSLS. The segment covering 1492–1506 has biased composition (basic residues); it reads SSRRSLRKAPLKTAN.

Component of the condensin-2 complex, which contains the SMC2 and SMC4 heterodimer, and 3 non SMC subunits that probably regulate the complex: NCAPH2, NCAPD3 and NCAPG2.

It localises to the nucleus. Regulatory subunit of the condensin-2 complex, a complex which establishes mitotic chromosome architecture and is involved in physical rigidity of the chromatid axis. May promote the resolution of double-strand DNA catenanes (intertwines) between sister chromatids. Condensin-mediated compaction likely increases tension in catenated sister chromatids, providing directionality for type II topoisomerase-mediated strand exchanges toward chromatid decatenation. Specifically required for decatenation of centromeric ultrafine DNA bridges during anaphase. Early in neurogenesis, may play an essential role to ensure accurate mitotic chromosome condensation in neuron stem cells, ultimately affecting neuron pool and cortex size. The chain is Condensin-2 complex subunit D3 (Ncapd3) from Mus musculus (Mouse).